We begin with the raw amino-acid sequence, 296 residues long: Maltose/maltodextrin transport system permease protein MalG (296 aa).

Over 1–12 (MAMVQPKSQKAR) the chain is Cytoplasmic. A helical membrane pass occupies residues 13-35 (LFITHLLLLLFIAAIMFPLLMVV). The Periplasmic portion of the chain corresponds to 36 to 88 (AISLRQGNFATGSLIPEQISWDHWKLALGFSVEQADGRITPPPFPVLLWLWNS). An ABC transmembrane type-1 domain is found at 85 to 281 (LWNSVKVAGI…LPITIVFLLA (197 aa)). The chain crosses the membrane as a helical span at residues 89–111 (VKVAGISAIGIVALSTTCAYAFA). Topologically, residues 112 to 123 (RMRFPGKATLLK) are cytoplasmic. The chain crosses the membrane as a helical span at residues 124-143 (GMLIFQMFPAVLSLVALYAL). At 144-152 (FDRLGEYIP) the chain is on the periplasmic side. A helical membrane pass occupies residues 153–175 (FIGLNTHGGVIFAYLGGIALHVW). Topologically, residues 176-204 (TIKGYFETIDSSLEEAAALDGATPWQAFR) are cytoplasmic. A helical transmembrane segment spans residues 205 to 227 (LVLLPLSVPILAVVFILSFIAAI). Residues 228–257 (TEVPVASLLLRDVNSYTLAVGMQQYLNPQN) lie on the Periplasmic side of the membrane. Residues 258 to 280 (YLWGDFAAAAVMSALPITIVFLL) traverse the membrane as a helical segment. Residues 281–296 (AQRWLVNGLTAGGVKG) are Cytoplasmic-facing.

Belongs to the binding-protein-dependent transport system permease family. MalFG subfamily. The complex is composed of two ATP-binding proteins (MalK), two transmembrane proteins (MalG and MalF) and a solute-binding protein (MalE).

The protein localises to the cell inner membrane. Its function is as follows. Part of the ABC transporter complex MalEFGK involved in maltose/maltodextrin import. Probably responsible for the translocation of the substrate across the membrane. This Escherichia coli O157:H7 protein is Maltose/maltodextrin transport system permease protein MalG (malG).